Reading from the N-terminus, the 102-residue chain is NADH-quinone oxidoreductase subunit K (102 aa).

Transmembrane regions (helical) follow at residues 6-26 (LEHG…GVMV), 30-50 (LLFM…AFVL), and 62-82 (VMFI…LAIV).

The protein belongs to the complex I subunit 4L family. In terms of assembly, NDH-1 is composed of 14 different subunits. Subunits NuoA, H, J, K, L, M, N constitute the membrane sector of the complex.

It is found in the cell inner membrane. It carries out the reaction a quinone + NADH + 5 H(+)(in) = a quinol + NAD(+) + 4 H(+)(out). NDH-1 shuttles electrons from NADH, via FMN and iron-sulfur (Fe-S) centers, to quinones in the respiratory chain. The immediate electron acceptor for the enzyme in this species is believed to be ubiquinone. Couples the redox reaction to proton translocation (for every two electrons transferred, four hydrogen ions are translocated across the cytoplasmic membrane), and thus conserves the redox energy in a proton gradient. This Acinetobacter baumannii (strain AB307-0294) protein is NADH-quinone oxidoreductase subunit K.